The primary structure comprises 417 residues: UDP-N-acetylglucosamine 1-carboxyvinyltransferase 3 (417 aa).

22 to 23 lines the phosphoenolpyruvate pocket; sequence KN. Arginine 92 is a binding site for UDP-N-acetyl-alpha-D-glucosamine. Cysteine 116 acts as the Proton donor in catalysis. Cysteine 116 bears the 2-(S-cysteinyl)pyruvic acid O-phosphothioketal mark. Residues 121 to 125, aspartate 304, and isoleucine 326 each bind UDP-N-acetyl-alpha-D-glucosamine; that span reads RPIDQ.

This sequence belongs to the EPSP synthase family. MurA subfamily.

It is found in the cytoplasm. The enzyme catalyses phosphoenolpyruvate + UDP-N-acetyl-alpha-D-glucosamine = UDP-N-acetyl-3-O-(1-carboxyvinyl)-alpha-D-glucosamine + phosphate. It functions in the pathway cell wall biogenesis; peptidoglycan biosynthesis. Its function is as follows. Cell wall formation. Adds enolpyruvyl to UDP-N-acetylglucosamine. This Caldanaerobacter subterraneus subsp. tengcongensis (strain DSM 15242 / JCM 11007 / NBRC 100824 / MB4) (Thermoanaerobacter tengcongensis) protein is UDP-N-acetylglucosamine 1-carboxyvinyltransferase 3.